A 504-amino-acid chain; its full sequence is Doublesex- and mab-3-related transcription factor A1 (504 aa).

Basic and acidic residues predominate over residues 1–13; that stretch reads MERSQCGSRDRGV. The interval 1–27 is disordered; the sequence is MERSQCGSRDRGVSGRPHLAPGLVVAA. Residues 97–144 constitute a DNA-binding region (DM); the sequence is CARCRNHGVVSALKGHKRFCRWRDCACAKCTLIAERQRVMAAQVALRR. 2 disordered regions span residues 170–192 and 266–307; these read GRAS…AAGA and SISE…NESE. The segment covering 293–306 has biased composition (low complexity); the sequence is RSLSSSDLESGNES. The 36-residue stretch at 327-362 folds into the DMA domain; the sequence is RDPLDILTKIFPNYRRSRLEGILRFCKGDVVQAIEQ.

This sequence belongs to the DMRT family. As to expression, expressed in liver, kidney, pancreas, prostate and weakly detected in testis and ovary.

It localises to the nucleus. The polypeptide is Doublesex- and mab-3-related transcription factor A1 (DMRTA1) (Homo sapiens (Human)).